Consider the following 440-residue polypeptide: Transposon TyH3 Gag polyprotein (440 aa).

Composition is skewed to polar residues over residues 1–23 (MESQ…SVTS), 48–60 (TKAN…TPAS), and 127–152 (QSQF…GNTF). Disordered regions lie at residues 1-93 (MESQ…MMTQ), 126-173 (PQSQ…RPPP), and 352-440 (GSRN…PETY). The segment covering 153–165 (TDSSSADSDMTST) has biased composition (low complexity). An RNA-binding region spans residues 299 to 401 (NNGIHINNKV…NSKSKTARAH (103 aa)). The span at 402–418 (NVSTSNNSPSTDNDSIS) shows a compositional bias: low complexity. Serine 416 is subject to Phosphoserine. Residues 419 to 428 (KSTTEPIQLN) show a composition bias toward polar residues. A compositionally biased stretch (basic and acidic residues) spans 429 to 440 (NKHDLHLRPETY).

As to quaternary structure, homotrimer.

It localises to the cytoplasm. Its function is as follows. Capsid protein (CA) is the structural component of the virus-like particle (VLP), forming the shell that encapsulates the retrotransposons dimeric RNA genome. The particles are assembled from trimer-clustered units and there are holes in the capsid shells that allow for the diffusion of macromolecules. CA also has nucleocapsid-like chaperone activity, promoting primer tRNA(i)-Met annealing to the multipartite primer-binding site (PBS), dimerization of Ty1 RNA and initiation of reverse transcription. The polypeptide is Transposon TyH3 Gag polyprotein (TY1A) (Saccharomyces cerevisiae (Baker's yeast)).